Reading from the N-terminus, the 766-residue chain is Phospholipid phosphatase-related protein type 4 (766 aa).

Residue S37 is modified to Phosphoserine. 4 helical membrane-spanning segments follow: residues 68–88, 120–140, 179–199, and 248–268; these read LPCF…SLYF, AIPF…TIMV, FVGV…IIQL, and SFPS…SMYF. N-linked (GlcNAc...) asparagine glycosylation is present at N269. 2 helical membrane-spanning segments follow: residues 277–297 and 309–329; these read KLLK…CGLT and VYCG…YAVG. S347 is subject to Phosphoserine. Residue N363 is glycosylated (N-linked (GlcNAc...) asparagine). S386 is subject to Phosphoserine. N433 carries N-linked (GlcNAc...) asparagine glycosylation. S439 is subject to Phosphoserine. 2 disordered regions span residues 454–503 and 510–529; these read SKNE…GNQY and TVPG…IQSR. N456 carries N-linked (GlcNAc...) asparagine glycosylation. 2 positions are modified to phosphoserine: S462 and S474. N515 and N545 each carry an N-linked (GlcNAc...) asparagine glycan. At S608 the chain carries Phosphoserine. 3 disordered regions span residues 634-654, 672-705, and 741-766; these read PIIQ…KWKA, DSES…GITT, and PERS…PYKD. The segment covering 688–702 has biased composition (basic residues); sequence RKRKHIDSNEHHHHG. Residues 743–752 show a composition bias toward polar residues; it reads RSNSPENTRN.

This sequence belongs to the PA-phosphatase related phosphoesterase family. In terms of processing, O-glycosylated. Probably at Ser-347. In terms of tissue distribution, specifically expressed in neurons (at protein level).

It localises to the postsynaptic density membrane. Its function is as follows. Postsynaptic density membrane protein that indirectly regulates glutamatergic synaptic transmission through lysophosphatidic acid (LPA)-mediated signaling pathways. Binds lysophosphatidic acid (LPA) and mediates its internalization into cells. Could act as receptor or a transporter of this lipid at the post-synaptic membrane. Modulates lysophosphatidic acid (LPA) activity in neuron axonal outgrowth during development by attenuating phospholipid-induced axon collapse. The polypeptide is Phospholipid phosphatase-related protein type 4 (Rattus norvegicus (Rat)).